Here is a 449-residue protein sequence, read N- to C-terminus: Tubulin alpha-2 chain (449 aa).

Q11 contributes to the GTP binding site. K40 bears the N6-acetyllysine mark. GTP is bound by residues S140, G144, T145, T179, N206, and N228. The active site involves E254.

The protein belongs to the tubulin family. In terms of assembly, dimer of alpha and beta chains. A typical microtubule is a hollow water-filled tube with an outer diameter of 25 nm and an inner diameter of 15 nM. Alpha-beta heterodimers associate head-to-tail to form protofilaments running lengthwise along the microtubule wall with the beta-tubulin subunit facing the microtubule plus end conferring a structural polarity. Microtubules usually have 13 protofilaments but different protofilament numbers can be found in some organisms and specialized cells. In terms of processing, acetylation of alpha chains at Lys-40 stabilizes microtubules and affects affinity and processivity of microtubule motors. This modification has a role in multiple cellular functions, ranging from cell motility, cell cycle progression or cell differentiation to intracellular trafficking and signaling.

Its subcellular location is the cytoplasm. It is found in the cytoskeleton. It carries out the reaction GTP + H2O = GDP + phosphate + H(+). Functionally, tubulin is the major constituent of microtubules, a cylinder consisting of laterally associated linear protofilaments composed of alpha- and beta-tubulin heterodimers. Microtubules grow by the addition of GTP-tubulin dimers to the microtubule end, where a stabilizing cap forms. Below the cap, tubulin dimers are in GDP-bound state, owing to GTPase activity of alpha-tubulin. The sequence is that of Tubulin alpha-2 chain from Stylonychia lemnae (Ciliate).